A 162-amino-acid polypeptide reads, in one-letter code: Glycogen accumulation regulator GarA (162 aa).

Phosphothreonine; by PknG is present on threonine 21. At threonine 22 the chain carries Phosphothreonine; by PknB. The FHA domain maps to 77-126 (TSAGRHPDSDIFLDDVTVSRRHAEFRLENNEFNVVDVGSLNGTYVNREPV).

In terms of assembly, monomer. In terms of processing, phosphorylated on Thr-22 by PknB. Phosphorylated on Thr-21 by PknG. Phosphorylation at either Thr-21 or Thr-22 prevents binding to target enzymes.

Involved in regulation of glutamate metabolism. This chain is Glycogen accumulation regulator GarA (garA), found in Mycobacterium tuberculosis (strain CDC 1551 / Oshkosh).